A 322-amino-acid chain; its full sequence is Aspartate carbamoyltransferase catalytic subunit (322 aa).

Carbamoyl phosphate contacts are provided by arginine 65 and threonine 66. Residue lysine 93 participates in L-aspartate binding. Carbamoyl phosphate-binding residues include arginine 115, histidine 143, and glutamine 146. Residues arginine 176 and arginine 230 each contribute to the L-aspartate site. Carbamoyl phosphate is bound by residues glycine 271 and proline 272.

This sequence belongs to the aspartate/ornithine carbamoyltransferase superfamily. ATCase family. Heterododecamer (2C3:3R2) of six catalytic PyrB chains organized as two trimers (C3), and six regulatory PyrI chains organized as three dimers (R2).

The enzyme catalyses carbamoyl phosphate + L-aspartate = N-carbamoyl-L-aspartate + phosphate + H(+). It functions in the pathway pyrimidine metabolism; UMP biosynthesis via de novo pathway; (S)-dihydroorotate from bicarbonate: step 2/3. In terms of biological role, catalyzes the condensation of carbamoyl phosphate and aspartate to form carbamoyl aspartate and inorganic phosphate, the committed step in the de novo pyrimidine nucleotide biosynthesis pathway. The sequence is that of Aspartate carbamoyltransferase catalytic subunit from Brucella anthropi (strain ATCC 49188 / DSM 6882 / CCUG 24695 / JCM 21032 / LMG 3331 / NBRC 15819 / NCTC 12168 / Alc 37) (Ochrobactrum anthropi).